Reading from the N-terminus, the 718-residue chain is Ribosomal RNA large subunit methyltransferase K/L (718 aa).

Residues 43-154 enclose the THUMP domain; the sequence is TQYRILLWSR…QDELVVSLDL (112 aa).

This sequence belongs to the methyltransferase superfamily. RlmKL family.

Its subcellular location is the cytoplasm. It catalyses the reaction guanosine(2445) in 23S rRNA + S-adenosyl-L-methionine = N(2)-methylguanosine(2445) in 23S rRNA + S-adenosyl-L-homocysteine + H(+). It carries out the reaction guanosine(2069) in 23S rRNA + S-adenosyl-L-methionine = N(2)-methylguanosine(2069) in 23S rRNA + S-adenosyl-L-homocysteine + H(+). In terms of biological role, specifically methylates the guanine in position 2445 (m2G2445) and the guanine in position 2069 (m7G2069) of 23S rRNA. This is Ribosomal RNA large subunit methyltransferase K/L from Histophilus somni (strain 2336) (Haemophilus somnus).